The following is a 212-amino-acid chain: Chloramphenicol acetyltransferase (212 aa).

Residue His186 is the Proton acceptor of the active site.

It belongs to the chloramphenicol acetyltransferase family. As to quaternary structure, homotrimer.

It carries out the reaction chloramphenicol + acetyl-CoA = chloramphenicol 3-acetate + CoA. Functionally, this enzyme is an effector of chloramphenicol resistance in bacteria. The polypeptide is Chloramphenicol acetyltransferase (catD) (Clostridioides difficile (Peptoclostridium difficile)).